A 289-amino-acid polypeptide reads, in one-letter code: Inorganic pyrophosphatase (289 aa).

Residue Arg-80 coordinates diphosphate. Positions 117, 122, and 154 each coordinate Mg(2+).

The protein belongs to the PPase family. Homodimer. The cofactor is Mg(2+).

It localises to the cytoplasm. The catalysed reaction is diphosphate + H2O = 2 phosphate + H(+). This is Inorganic pyrophosphatase (ppa1) from Schizosaccharomyces pombe (strain 972 / ATCC 24843) (Fission yeast).